Consider the following 595-residue polypeptide: MFS-type transporter phomT (595 aa).

Positions 1–11 (MESDGKSDRTK) are enriched in basic and acidic residues. The segment at 1 to 62 (MESDGKSDRT…HVSADDGPVD (62 aa)) is disordered. A compositionally biased stretch (polar residues) spans 30-48 (PGHSTDTEGNGSDNNNTQV). Residues Asn-39 and Asn-44 are each glycosylated (N-linked (GlcNAc...) asparagine). A run of 3 helical transmembrane segments spans residues 91–111 (IILLALELAVLCVALDNTIVA), 126–146 (DVGWYGSAYLLTLCAFQLFFG), and 156–176 (WVFLSCLFIFEIGSLICGVAP). N-linked (GlcNAc...) asparagine glycosylation is present at Asn-177. The next 3 helical transmembrane spans lie at 186–206 (AVAGLGAAGIFSGALIIIAFS), 217–237 (ALISAIFGISSVIGPLLGGVF), and 245–265 (WCFYINLPIGGVTAVALVFFL). Residue Asn-277 is glycosylated (N-linked (GlcNAc...) asparagine). Helical transmembrane passes span 290–310 (IGTAIFLPCIVCILLALQWGG), 320–340 (VVALLVLFGVLLITFVGLQFW), 362–382 (VFTGLVGASFFIMVYYLPIWF), 409–429 (IVGGVFVSFTGYYTPMMYALP), 451–471 (WIGYQILFGLGLGLGMQQGIV), 483–503 (AIGTSLQVFAQMFGGSLFVSV), and 559–579 (VIWTFRTALITTCLSVLAVIF).

Belongs to the major facilitator superfamily. TCR/Tet family.

The protein resides in the cell membrane. In terms of biological role, MFS-type transporter; part of the gene cluster that mediates the biosynthesis of the phomopsins, a group of hexapeptide mycotoxins which infects lupins and causes lupinosis disease in livestock. PhomT is likely to be involved in the cellular export of phomopsins. The protein is MFS-type transporter phomT of Diaporthe leptostromiformis (Lupinosis disease fungus).